Here is a 59-residue protein sequence, read N- to C-terminus: Large ribosomal subunit protein uL30 (59 aa).

Belongs to the universal ribosomal protein uL30 family. As to quaternary structure, part of the 50S ribosomal subunit.

This Geotalea daltonii (strain DSM 22248 / JCM 15807 / FRC-32) (Geobacter daltonii) protein is Large ribosomal subunit protein uL30.